A 358-amino-acid polypeptide reads, in one-letter code: Peptide chain release factor 1 (358 aa).

Position 233 is an N5-methylglutamine (glutamine 233).

It belongs to the prokaryotic/mitochondrial release factor family. Post-translationally, methylated by PrmC. Methylation increases the termination efficiency of RF1.

It is found in the cytoplasm. Functionally, peptide chain release factor 1 directs the termination of translation in response to the peptide chain termination codons UAG and UAA. This chain is Peptide chain release factor 1, found in Clostridium botulinum (strain Loch Maree / Type A3).